A 256-amino-acid chain; its full sequence is Small ribosomal subunit protein uS2 (256 aa).

Belongs to the universal ribosomal protein uS2 family.

The protein is Small ribosomal subunit protein uS2 of Streptococcus agalactiae serotype III (strain NEM316).